Reading from the N-terminus, the 324-residue chain is Glyoxylate/hydroxypyruvate reductase B (324 aa).

Active-site residues include Arg-237 and Glu-266. The active-site Proton donor is His-285.

Belongs to the D-isomer specific 2-hydroxyacid dehydrogenase family. GhrB subfamily. Homodimer.

It localises to the cytoplasm. The enzyme catalyses glycolate + NADP(+) = glyoxylate + NADPH + H(+). It catalyses the reaction (R)-glycerate + NAD(+) = 3-hydroxypyruvate + NADH + H(+). It carries out the reaction (R)-glycerate + NADP(+) = 3-hydroxypyruvate + NADPH + H(+). Its function is as follows. Catalyzes the NADPH-dependent reduction of glyoxylate and hydroxypyruvate into glycolate and glycerate, respectively. This Escherichia coli O6:H1 (strain CFT073 / ATCC 700928 / UPEC) protein is Glyoxylate/hydroxypyruvate reductase B.